Here is a 652-residue protein sequence, read N- to C-terminus: DNA ligase (652 aa).

NAD(+) contacts are provided by residues 29 to 33 (DSDYD), 78 to 79 (SL), and Glu-107. Catalysis depends on Lys-109, which acts as the N6-AMP-lysine intermediate. Positions 130, 164, 278, and 302 each coordinate NAD(+). Cys-395, Cys-398, Cys-413, and Cys-418 together coordinate Zn(2+). In terms of domain architecture, BRCT spans 577 to 652 (NSDAALFGLT…IEDEDWLRQL (76 aa)).

It belongs to the NAD-dependent DNA ligase family. LigA subfamily. Mg(2+) serves as cofactor. Mn(2+) is required as a cofactor.

It carries out the reaction NAD(+) + (deoxyribonucleotide)n-3'-hydroxyl + 5'-phospho-(deoxyribonucleotide)m = (deoxyribonucleotide)n+m + AMP + beta-nicotinamide D-nucleotide.. Functionally, DNA ligase that catalyzes the formation of phosphodiester linkages between 5'-phosphoryl and 3'-hydroxyl groups in double-stranded DNA using NAD as a coenzyme and as the energy source for the reaction. It is essential for DNA replication and repair of damaged DNA. In Streptococcus pyogenes serotype M49 (strain NZ131), this protein is DNA ligase.